Reading from the N-terminus, the 571-residue chain is Podocalyxin (571 aa).

Residues 1–22 (MRPAPPPPLLLLLLLLPPPSLS) form the signal peptide. The Extracellular segment spans residues 23–474 (HDGTIIAATS…EETEDRFSMP (452 aa)). The disordered stretch occupies residues 94-361 (NTVIAPDQDE…QGDDRIKCES (268 aa)). The segment covering 106–116 (STNPTIATSDS) has biased composition (polar residues). An N-linked (GlcNAc...) asparagine glycan is attached at asparagine 123. Polar residues-rich tracts occupy residues 126-144 (ILPS…TQTA), 151-169 (NPGT…QTTS), 176-203 (KPSS…STTL), and 218-245 (TASS…SSVT). Asparagine 199 carries an N-linked (GlcNAc...) asparagine glycan. Low complexity predominate over residues 282 to 300 (TTSLPSETESLESPSSESP). Residues 301–311 (SQPPKLRPTGP) are compositionally biased toward pro residues. The segment covering 312-322 (PSSGSSGPAAS) has biased composition (low complexity). 2 N-linked (GlcNAc...) asparagine glycosylation sites follow: asparagine 373 and asparagine 383. The helical transmembrane segment at 475 to 495 (LIITIVCMASFLLLVAALYGC) threads the bilayer. Over 496 to 571 (CHQRLSQRKD…DLDEEEDTHL (76 aa)) the chain is Cytoplasmic. Threonine 531 is modified (phosphothreonine). Position 550 is a phosphoserine (serine 550). At threonine 569 the chain carries Phosphothreonine.

Belongs to the podocalyxin family. In terms of assembly, found in a complex with EZR, PODXL and NHERF2. Associates with the actin cytoskeleton through complex formation with EZR and NHERF2. Interacts (via the C-terminal PDZ-binding motif DTHL) with NHERF1 (via the PDZ domains); interaction is not detected in glomerular epithelium cells. Interacts (via the C-terminal PDZ-binding motif DTHL) with NHERF2 (via the PDZ 1 domain); interaction is detected in glomerular epithelium cells. Interacts with EZR. Monomer; when associated with the membrane raft. Oligomer; when integrated in the apical membrane. Interacts with NHERF2. Interacts (via the C-terminal PDZ-binding motif DTHL) with NHERF1 (via the PDZ domains); the interaction take place early in the secretory pathway and is necessary for its apical membrane sorting. N- and O-linked glycosylated. Sialoglycoprotein. Expressed in glomerular and tubular epithelial cells and peritubular capillaries of the kidney (at protein level). Expressed in heart, lung, renal cortex and medulla, kidney and muscle.

It is found in the apical cell membrane. Its subcellular location is the membrane raft. It localises to the cell projection. The protein resides in the lamellipodium. The protein localises to the filopodium. It is found in the ruffle. Its subcellular location is the microvillus. It localises to the membrane. In terms of biological role, involved in the regulation of both adhesion and cell morphology and cancer progression. Functions as an anti-adhesive molecule that maintains an open filtration pathway between neighboring foot processes in the podocyte by charge repulsion. Acts as a pro-adhesive molecule, enhancing the adherence of cells to immobilized ligands, increasing the rate of migration and cell-cell contacts in an integrin-dependent manner. Induces the formation of apical actin-dependent microvilli. Involved in the formation of a preapical plasma membrane subdomain to set up initial epithelial polarization and the apical lumen formation during renal tubulogenesis. Plays a role in cancer development and aggressiveness by inducing cell migration and invasion through its interaction with the actin-binding protein EZR. Affects EZR-dependent signaling events, leading to increased activities of the MAPK and PI3K pathways in cancer cells. This chain is Podocalyxin (PODXL), found in Canis lupus familiaris (Dog).